The following is a 179-amino-acid chain: ATP synthase subunit delta (179 aa).

The protein belongs to the ATPase delta chain family. F-type ATPases have 2 components, F(1) - the catalytic core - and F(0) - the membrane proton channel. F(1) has five subunits: alpha(3), beta(3), gamma(1), delta(1), epsilon(1). F(0) has three main subunits: a(1), b(2) and c(10-14). The alpha and beta chains form an alternating ring which encloses part of the gamma chain. F(1) is attached to F(0) by a central stalk formed by the gamma and epsilon chains, while a peripheral stalk is formed by the delta and b chains.

It localises to the cell membrane. Functionally, f(1)F(0) ATP synthase produces ATP from ADP in the presence of a proton or sodium gradient. F-type ATPases consist of two structural domains, F(1) containing the extramembraneous catalytic core and F(0) containing the membrane proton channel, linked together by a central stalk and a peripheral stalk. During catalysis, ATP synthesis in the catalytic domain of F(1) is coupled via a rotary mechanism of the central stalk subunits to proton translocation. Its function is as follows. This protein is part of the stalk that links CF(0) to CF(1). It either transmits conformational changes from CF(0) to CF(1) or is implicated in proton conduction. This chain is ATP synthase subunit delta, found in Metamycoplasma arthritidis (strain 158L3-1) (Mycoplasma arthritidis).